The primary structure comprises 434 residues: Putative B3 domain-containing protein Os04g0347400 (434 aa).

3 consecutive DNA-binding regions (TF-B3) follow at residues 27–124 (SFHK…FDTT), 150–246 (KPQF…FGIN), and 326–432 (WIKK…DRVE).

It localises to the nucleus. The chain is Putative B3 domain-containing protein Os04g0347400 from Oryza sativa subsp. japonica (Rice).